The chain runs to 268 residues: Leucyl/phenylalanyl-tRNA--protein transferase (268 aa).

This sequence belongs to the L/F-transferase family.

Its subcellular location is the cytoplasm. The catalysed reaction is N-terminal L-lysyl-[protein] + L-leucyl-tRNA(Leu) = N-terminal L-leucyl-L-lysyl-[protein] + tRNA(Leu) + H(+). It catalyses the reaction N-terminal L-arginyl-[protein] + L-leucyl-tRNA(Leu) = N-terminal L-leucyl-L-arginyl-[protein] + tRNA(Leu) + H(+). The enzyme catalyses L-phenylalanyl-tRNA(Phe) + an N-terminal L-alpha-aminoacyl-[protein] = an N-terminal L-phenylalanyl-L-alpha-aminoacyl-[protein] + tRNA(Phe). Its function is as follows. Functions in the N-end rule pathway of protein degradation where it conjugates Leu, Phe and, less efficiently, Met from aminoacyl-tRNAs to the N-termini of proteins containing an N-terminal arginine or lysine. In Zymomonas mobilis subsp. mobilis (strain ATCC 31821 / ZM4 / CP4), this protein is Leucyl/phenylalanyl-tRNA--protein transferase.